We begin with the raw amino-acid sequence, 286 residues long: Pyridoxal kinase PdxY (286 aa).

Substrate is bound by residues S9 and 44–45 (TQ). ATP is bound by residues D111, A143, E148, K181, and 208–211 (RPLV). A substrate-binding site is contributed by D223.

This sequence belongs to the pyridoxine kinase family. PdxY subfamily. As to quaternary structure, homodimer. It depends on Mg(2+) as a cofactor.

The catalysed reaction is pyridoxal + ATP = pyridoxal 5'-phosphate + ADP + H(+). It functions in the pathway cofactor metabolism; pyridoxal 5'-phosphate salvage; pyridoxal 5'-phosphate from pyridoxal: step 1/1. Functionally, pyridoxal kinase involved in the salvage pathway of pyridoxal 5'-phosphate (PLP). Catalyzes the phosphorylation of pyridoxal to PLP. This is Pyridoxal kinase PdxY from Salmonella choleraesuis (strain SC-B67).